The sequence spans 380 residues: Tomoregulin-1 (380 aa).

The first 39 residues, 1-39 (MGAAAAEAPLRLPAAPPLAFCCYTSVLLLFAFSLPGSRA), serve as a signal peptide directing secretion. Residues 40 to 330 (SNQPPGGGGG…VPSRQKLTHV (291 aa)) lie on the Extracellular side of the membrane. Kazal-like domains are found at residues 98–145 (ACQF…PCYS) and 189–237 (VCNI…HCTD). Intrachain disulfides connect C99–C129, C103–C122, C111–C143, C190–C221, C194–C214, C203–C235, C275–C288, C283–C299, and C301–C310. An EGF-like domain is found at 271–311 (NHMPCPENLNGYCIHGKCEFIYSTQKASCRCESGYTGQHCE). A helical membrane pass occupies residues 331-351 (LIAAIIGAVQIAIIVAIVMCI). The Cytoplasmic segment spans residues 352–380 (TRKCPKNNRGRRQKQNLGHFTSDTSSRMV). Residues 359 to 380 (NRGRRQKQNLGHFTSDTSSRMV) form a disordered region. Residues 366–380 (QNLGHFTSDTSSRMV) are compositionally biased toward polar residues.

Belongs to the tomoregulin family. In terms of assembly, may interact with ST14. Expressed predominantly in brain, and at lower levels in heart, placenta and skeletal muscle. Down-regulated in brain tumors as compared to control brain tissues.

Its subcellular location is the cell membrane. Its function is as follows. Neuron-specific restriction factor that prevents herpes simplex virus 1 (HHV-1) infection in the brain by blocking viral entry. Also able to restrict herpes simplex virus 2 (HHV-2) infection, although to a lesser extent. Acts by preventing the association between the viral glycoprotein D (gD) and its cell surface receptor NECTIN1, thereby inhibiting fusion of the virus and the cell membrane. Also able to prevent the association between the viral glycoprotein B (gB) and MYH9/NMMHC-IIA and MYH10/NMMHC-IIB receptors. May be a tumor suppressor in brain cancers. This Homo sapiens (Human) protein is Tomoregulin-1.